The primary structure comprises 136 residues: Large ribosomal subunit protein uL16 (136 aa).

This sequence belongs to the universal ribosomal protein uL16 family. Part of the 50S ribosomal subunit.

In terms of biological role, binds 23S rRNA and is also seen to make contacts with the A and possibly P site tRNAs. This chain is Large ribosomal subunit protein uL16, found in Shewanella halifaxensis (strain HAW-EB4).